The primary structure comprises 381 residues: 3-dehydroquinate synthase (381 aa).

NAD(+) contacts are provided by residues 81 to 86 (EGEVSK), 115 to 119 (GVVGD), 139 to 140 (TS), Lys-152, and Lys-161. Zn(2+) contacts are provided by Glu-194, His-256, and His-274.

Belongs to the sugar phosphate cyclases superfamily. Dehydroquinate synthase family. Co(2+) serves as cofactor. It depends on Zn(2+) as a cofactor. Requires NAD(+) as cofactor.

The protein localises to the cytoplasm. It catalyses the reaction 7-phospho-2-dehydro-3-deoxy-D-arabino-heptonate = 3-dehydroquinate + phosphate. It functions in the pathway metabolic intermediate biosynthesis; chorismate biosynthesis; chorismate from D-erythrose 4-phosphate and phosphoenolpyruvate: step 2/7. Functionally, catalyzes the conversion of 3-deoxy-D-arabino-heptulosonate 7-phosphate (DAHP) to dehydroquinate (DHQ). The protein is 3-dehydroquinate synthase of Rhodopseudomonas palustris (strain BisA53).